The sequence spans 160 residues: Early E3 18.5 kDa glycoprotein (160 aa).

The signal sequence occupies residues 1-17 (MIRYIILGLLTLASAHG). Residues 18–124 (TTQKVDFKEP…PPQNCVENTG (107 aa)) are Lumenal-facing. 2 disulfide bridges follow: cysteine 29–cysteine 46 and cysteine 40–cysteine 101. Residues asparagine 30 and asparagine 79 are each glycosylated (N-linked (GlcNAc...) asparagine; by host). Residues 125-145 (TFCCTAMLITVLALVCTLLYI) form a helical membrane-spanning segment. The Cytoplasmic segment spans residues 146-160 (KYKSRRSFIEEKKMP). The short motif at 157–160 (KKMP) is the Di-lysine motif element.

Belongs to the adenoviridae E19 family. In terms of processing, both disulfide bonds are absolutely critical for the interaction with MHC antigens. Post-translationally, N-glycosylated; high-mannose.

The protein localises to the host endoplasmic reticulum membrane. Functionally, binds and retains class I heavy chains in the endoplasmic reticulum during the early period of virus infection, thereby impairing their transport to the cell surface. Also delays the expression of class I alleles that it cannot affect by direct retention. Binds transporters associated with antigen processing (TAP) and acts as a tapasin inhibitor, preventing class I/TAP association. In consequence, infected cells are masked for immune recognition by cytotoxic T-lymphocytes. The chain is Early E3 18.5 kDa glycoprotein from Homo sapiens (Human).